The sequence spans 299 residues: Epimerase family protein SH2119 (299 aa).

Belongs to the NAD(P)-dependent epimerase/dehydratase family. SDR39U1 subfamily.

The protein is Epimerase family protein SH2119 of Staphylococcus haemolyticus (strain JCSC1435).